The primary structure comprises 97 residues: MSEYLILCSILFSLGAFGVLYRRNILVMFMCIELMLNSVNLLMVYFSALHNDQSGQVFVFFIMAVAAAEITIGLAILVMIFRHLGSINIDSLKKLKW.

Helical transmembrane passes span M1–Y21, I25–Y45, and V57–L77.

Belongs to the complex I subunit 4L family. In terms of assembly, NDH-1 is composed of 14 different subunits. Subunits NuoA, H, J, K, L, M, N constitute the membrane sector of the complex.

Its subcellular location is the cell inner membrane. The enzyme catalyses a quinone + NADH + 5 H(+)(in) = a quinol + NAD(+) + 4 H(+)(out). In terms of biological role, NDH-1 shuttles electrons from NADH, via FMN and iron-sulfur (Fe-S) centers, to quinones in the respiratory chain. The immediate electron acceptor for the enzyme in this species is believed to be a menaquinone. Couples the redox reaction to proton translocation (for every two electrons transferred, four hydrogen ions are translocated across the cytoplasmic membrane), and thus conserves the redox energy in a proton gradient. The protein is NADH-quinone oxidoreductase subunit K of Cytophaga hutchinsonii (strain ATCC 33406 / DSM 1761 / CIP 103989 / NBRC 15051 / NCIMB 9469 / D465).